We begin with the raw amino-acid sequence, 632 residues long: Cytoplasmic polyadenylation element-binding protein 3 (632 aa).

Positions 1-11 are enriched in basic and acidic residues; that stretch reads MQDDLLMDKSK. 2 disordered regions span residues 1–89 and 127–212; these read MQDD…TGGS and FSPQ…RRAV. Over residues 13–48 the composition is skewed to low complexity; the sequence is QQRQQPQQPPSSQTQQQQKEAASVAEPPSSRESSPP. Polar residues-rich tracts occupy residues 65-89 and 135-169; these read SFQQ…TGGS and HQTQ…LTNK. Residues 170 to 193 show a composition bias toward low complexity; sequence PSSSPNSSSPSPSNWNNQQNAAWN. RRM domains follow at residues 375 to 466 and 483 to 565; these read RKVF…PWNL and KTIF…PYVL.

The protein belongs to the RRM CPEB family. In terms of assembly, following synaptic activity, forms amyloid-like oligomers. Aggregation requires an intact actin cytoskeleton. In embryos, expressed in the central nervous system, and intermediate and distal pronephric tubule segments of the embryonic kidney.

The protein localises to the cytoplasm. The protein resides in the nucleus. It is found in the synapse. Its subcellular location is the cell projection. It localises to the dendrite. The protein localises to the postsynaptic density. Sequence-specific RNA-binding protein which acts as a translational repressor in the basal unstimulated state but, following neuronal stimulation, acts as a translational activator. Does not bind to the cytoplasmic polyadenylation element (CPE), a uridine-rich sequence element within the mRNA 3'-UTR, but binds to a U-rich loop within a stem-loop structure. Required for the consolidation and maintenance of hippocampal-based long term memory. Inhibits differentiation of intermediate mesoderm from an early stage to inhibit pronephric differentiation but induce neural differentiation. The protein is Cytoplasmic polyadenylation element-binding protein 3 (cpeb3) of Xenopus tropicalis (Western clawed frog).